The sequence spans 532 residues: MQTPSSASAESEKDSGNTYVGPWLLGRTLGQGNLAKVKLGKHFQTNEKVALKMVYNDELEDKDTWKRLQREVTILRQLHHPNIITLYQVFRVPKYTVLALEYMDTDLHSMVVKHNRLDECTTRKIFRQIVHAIDYCHLHRVAHRDLKLENILLNKDLVVKLTDFGLSNFMLDGSFLSTSCGTPHYAAPEVIQGRYYDGCDVDVWGCGILLYLMLVGEFPFEDVTISNVLSRVCKGIYTIPSFVSSSASDLIRQMLMVLPTSRIKVAEIMQHPWFIADLPTHSRLPSRTSSFSSKHRSVTFSPPDLAILFDPSITSPSSSVGQIPQPTDHSALSPSKPMSISGTESPNPDPASLCYSSYEDLYSATSWHSDMAESSGFLDPTDIPPIPSNVETLRSSLPQRHASFMNKVYNHPLSRPPAPNRLRSLRWHYGIQTAKNPIEVLRKLCEALLELGARFRPCDEESFLKENKYKVFSCITCHNSPVYLVIELFSIGPSASVIDIRFSSSDDSIKYTSSYSPMPFLEVVKQLILKIA.

Positions 23–274 (WLLGRTLGQG…VAEIMQHPWF (252 aa)) constitute a Protein kinase domain. ATP-binding positions include 29–37 (LGQGNLAKV) and K52. The active-site Proton acceptor is the D145. The segment covering 316 to 346 (PSSSVGQIPQPTDHSALSPSKPMSISGTESP) has biased composition (polar residues). The interval 316-349 (PSSSVGQIPQPTDHSALSPSKPMSISGTESPNPD) is disordered.

The protein localises to the cytoplasm. The protein resides in the nucleus. It localises to the cytoskeleton. Its subcellular location is the microtubule organizing center. It is found in the spindle pole body. The chain is Protein kinase domain-containing protein ppk9 (ppk9) from Schizosaccharomyces pombe (strain 972 / ATCC 24843) (Fission yeast).